A 201-amino-acid polypeptide reads, in one-letter code: Putative lipoprotein LppC (201 aa).

The N-terminal stretch at 1–23 is a signal peptide; that stretch reads MTSTLHRTPLATAGLALVVALGG. A lipid anchor (N-palmitoyl cysteine) is attached at cysteine 24. Cysteine 24 carries S-diacylglycerol cysteine lipidation. Prevents bacterial uptake by a human macrophage-like cell line regions lie at residues 77–96, 97–116, and 117–136; these read GANVAPPLTWSSPAGAAELA, LVVDDPDAVGGLYVHWIVTG, and IAPGSGSTADGQTPAGGHSV. Residues 122–141 are disordered; sequence GSTADGQTPAGGHSVPNSGG.

It belongs to the UPF0098 family.

The protein resides in the cell membrane. It localises to the cell surface. Functionally, probably involved in bacterial recognition and uptake by its host (human). The polypeptide is Putative lipoprotein LppC (Mycobacterium tuberculosis (strain ATCC 25618 / H37Rv)).